A 486-amino-acid chain; its full sequence is Matrilin-3 (486 aa).

Residues 1–28 (MPRPAPARRLPGLLLLLWPLLLLPSAAP) form the signal peptide. The interval 32–75 (ARPGFRRLETRGPGGSPGRRPSPAAPDGAPASGTSEPGRARGAG) is disordered. The segment covering 49–64 (GRRPSPAAPDGAPASG) has biased composition (low complexity). The 176-residue stretch at 83 to 258 (DLVFIIDSSR…GVIEKLSSRF (176 aa)) folds into the VWFA domain. R198 is modified (omega-N-methylarginine). EGF-like domains follow at residues 264 to 305 (ALDP…KTCS), 306 to 347 (ALDR…KTCS), 348 to 389 (AQDK…KTCS), and 390 to 431 (VRDK…KTCS). Cystine bridges form between C268-C279, C275-C289, C291-C304, C310-C321, C317-C331, C333-C346, C352-C363, C359-C373, C375-C388, C394-C405, C401-C415, and C417-C430. A Phosphoserine; by FAM20C modification is found at S441. A Phosphothreonine; by FAM20C modification is found at T442. The stretch at 456 to 480 (DKVSSYLQRLNTKLDDILEKLKINE) forms a coiled coil.

In terms of assembly, can form homooligomers (monomers, dimers, trimers and tetramers) and heterooligomers with matrilin-1. Interacts with COMP. Component of a complex containing at least CRELD2, MANF, MATN3 and PDIA4. Expressed only in cartilaginous tissues, such as vertebrae, ribs and shoulders.

It is found in the secreted. Its function is as follows. Major component of the extracellular matrix of cartilage and may play a role in the formation of extracellular filamentous networks. This chain is Matrilin-3 (MATN3), found in Homo sapiens (Human).